The primary structure comprises 189 residues: Thermostable direct hemolysin-related (189 aa).

The N-terminal stretch at 1–24 (MKYRYFAKKSFLFISMLAAFKTFA) is a signal peptide. C175 and C185 are joined by a disulfide.

It belongs to the TDH hemolysin family. Homodimer.

Bacterial hemolysins are exotoxins that attack blood cell membranes and cause cell rupture by mechanisms not clearly defined. The chain is Thermostable direct hemolysin-related (tdh3) from Vibrio parahaemolyticus.